The sequence spans 281 residues: CCAAT/enhancer-binding protein epsilon (281 aa).

The interval 1 to 30 (MSHGTYYECEPRAGQQPLEFSGARAGPGEL) is disordered. Residue lysine 121 forms a Glycyl lysine isopeptide (Lys-Gly) (interchain with G-Cter in SUMO2) linkage. Serine 181 carries the post-translational modification Phosphoserine. Positions 204–267 (SLEYRLRRER…DTLRNLFRQI (64 aa)) constitute a bZIP domain. Residues 208 to 228 (RLRRERNNIAVRKSRDKAKRR) are basic motif. Positions 230–237 (LETQQKVL) are leucine-zipper.

This sequence belongs to the bZIP family. C/EBP subfamily. As to quaternary structure, binds DNA as a homodimer and as a heterodimer. Can form stable heterodimers with CEBPA, CEBPB and CEBPD. Interacts with GATA1 and SPI1. Interacts with SMARCD2. Post-translationally, phosphorylated.

The protein resides in the nucleus. In terms of biological role, transcriptional activator. C/EBP are DNA-binding proteins that recognize two different motifs: the CCAAT homology common to many promoters and the enhanced core homology common to many enhancers. Required for the promyelocyte-myelocyte transition in myeloid differentiation. This chain is CCAAT/enhancer-binding protein epsilon (CEBPE), found in Ovis aries (Sheep).